Consider the following 202-residue polypeptide: Small ribosomal subunit protein uS4c (202 aa).

The 63-residue stretch at 90-152 (MRLDNVIFRL…RKSESIINKN (63 aa)) folds into the S4 RNA-binding domain.

It belongs to the universal ribosomal protein uS4 family. Part of the 30S ribosomal subunit. Contacts protein S5. The interaction surface between S4 and S5 is involved in control of translational fidelity.

Its subcellular location is the plastid. The protein localises to the chloroplast. Functionally, one of the primary rRNA binding proteins, it binds directly to 16S rRNA where it nucleates assembly of the body of the 30S subunit. In terms of biological role, with S5 and S12 plays an important role in translational accuracy. The sequence is that of Small ribosomal subunit protein uS4c (rps4) from Dendrohypopterygium filiculiforme (Moss).